The chain runs to 317 residues: Secreted mono- and diacylglycerol lipase 3 (317 aa).

The signal sequence occupies residues 1–29 (MMFADDLVRMAVLRFITVALAAITNVANA). A disulfide bond links cysteine 61 and cysteine 310. A glycan (N-linked (GlcNAc...) asparagine) is linked at asparagine 108. The active-site Nucleophile is serine 175. An N-linked (GlcNAc...) asparagine glycan is attached at asparagine 194. Residue aspartate 234 is part of the active site. N-linked (GlcNAc...) asparagine glycosylation occurs at asparagine 258. The active site involves histidine 294.

Belongs to the AB hydrolase superfamily. Lipase family. Class 3 subfamily.

It localises to the secreted. The enzyme catalyses a monoacylglycerol + H2O = glycerol + a fatty acid + H(+). It carries out the reaction a diacylglycerol + H2O = a monoacylglycerol + a fatty acid + H(+). Secreted mono- and diacylglycerol lipase involved in plant virulence. Has a substrate preference for p-nitrophenyl esters with a carbon chain length of C10 (p-nitrophenyl caprate). The protein is Secreted mono- and diacylglycerol lipase 3 of Gibberella zeae (strain ATCC MYA-4620 / CBS 123657 / FGSC 9075 / NRRL 31084 / PH-1) (Wheat head blight fungus).